The following is a 125-amino-acid chain: Methylglyoxal synthase (125 aa).

An MGS-like domain is found at 1-125 (MTERLRIALI…TAEKLIKALD (125 aa)). Residues H12, K16, 38 to 41 (TGTT), and 59 to 60 (SG) each bind substrate. D65 functions as the Proton donor/acceptor in the catalytic mechanism. Position 92 (H92) interacts with substrate.

The protein belongs to the methylglyoxal synthase family.

It carries out the reaction dihydroxyacetone phosphate = methylglyoxal + phosphate. Catalyzes the formation of methylglyoxal from dihydroxyacetone phosphate. The sequence is that of Methylglyoxal synthase from Brucella anthropi (strain ATCC 49188 / DSM 6882 / CCUG 24695 / JCM 21032 / LMG 3331 / NBRC 15819 / NCTC 12168 / Alc 37) (Ochrobactrum anthropi).